The primary structure comprises 261 residues: MAAESGKIDPMHQFEVTPLGGGFNLGGQEVLFTNSALWMVVAAITLGLFMWGGMRRQLVPGRWQVAVEGFTGFISSMMMANIGTEGRKYTPYVFSLFMFILFCNLLGMLPLGVLGLHPFTVTSHIAITGVLALISFAIVLVVGFWRHGLHFFSLFVPHGTPLPMIPIIAPIEFVSFMVRPFSLGLRLFVAMTAGHVLLKVLSGFVINGFNAETLWLGSIVSVLSFTLMIGISALELLVAGIQAYVFALLTSLYINDAVNLH.

8 helical membrane passes run 30-50 (VLFTNSALWMVVAAITLGLFM), 63-83 (WQVAVEGFTGFISSMMMANIG), 96-116 (LFMFILFCNLLGMLPLGVLGL), 125-145 (IAITGVLALISFAIVLVVGFW), 151-171 (FFSLFVPHGTPLPMIPIIAPI), 187-207 (LFVAMTAGHVLLKVLSGFVIN), 214-234 (LWLGSIVSVLSFTLMIGISAL), and 235-255 (ELLVAGIQAYVFALLTSLYIN).

It belongs to the ATPase A chain family. As to quaternary structure, F-type ATPases have 2 components, CF(1) - the catalytic core - and CF(0) - the membrane proton channel. CF(1) has five subunits: alpha(3), beta(3), gamma(1), delta(1), epsilon(1). CF(0) has three main subunits: a(1), b(2) and c(9-12). The alpha and beta chains form an alternating ring which encloses part of the gamma chain. CF(1) is attached to CF(0) by a central stalk formed by the gamma and epsilon chains, while a peripheral stalk is formed by the delta and b chains.

Its subcellular location is the cell inner membrane. Key component of the proton channel; it plays a direct role in the translocation of protons across the membrane. The protein is ATP synthase subunit a of Sphingopyxis alaskensis (strain DSM 13593 / LMG 18877 / RB2256) (Sphingomonas alaskensis).